Here is a 267-residue protein sequence, read N- to C-terminus: Phosphatidylglycerol--prolipoprotein diacylglyceryl transferase (267 aa).

The next 4 membrane-spanning stretches (helical) occupy residues 10 to 30, 54 to 74, 90 to 110, and 116 to 136; these read VAIA…VVGF, LLFY…ALFY, WDGG…AWLF, and LAFF…LGAG. Residue Arg-137 coordinates a 1,2-diacyl-sn-glycero-3-phospho-(1'-sn-glycerol). Helical transmembrane passes span 169-189, 197-217, and 231-251; these read PSPL…LWWV, GMIS…VEFV, and WLTM…ALCV.

This sequence belongs to the Lgt family.

It is found in the cell inner membrane. The enzyme catalyses L-cysteinyl-[prolipoprotein] + a 1,2-diacyl-sn-glycero-3-phospho-(1'-sn-glycerol) = an S-1,2-diacyl-sn-glyceryl-L-cysteinyl-[prolipoprotein] + sn-glycerol 1-phosphate + H(+). It participates in protein modification; lipoprotein biosynthesis (diacylglyceryl transfer). Functionally, catalyzes the transfer of the diacylglyceryl group from phosphatidylglycerol to the sulfhydryl group of the N-terminal cysteine of a prolipoprotein, the first step in the formation of mature lipoproteins. In Chromohalobacter salexigens (strain ATCC BAA-138 / DSM 3043 / CIP 106854 / NCIMB 13768 / 1H11), this protein is Phosphatidylglycerol--prolipoprotein diacylglyceryl transferase.